Here is a 123-residue protein sequence, read N- to C-terminus: Large ribosomal subunit protein uL18 (123 aa).

This sequence belongs to the universal ribosomal protein uL18 family. In terms of assembly, part of the 50S ribosomal subunit; part of the 5S rRNA/L5/L18/L25 subcomplex. Contacts the 5S and 23S rRNAs.

This is one of the proteins that bind and probably mediate the attachment of the 5S RNA into the large ribosomal subunit, where it forms part of the central protuberance. The chain is Large ribosomal subunit protein uL18 from Bifidobacterium adolescentis (strain ATCC 15703 / DSM 20083 / NCTC 11814 / E194a).